Here is a 599-residue protein sequence, read N- to C-terminus: Elongation factor 4 (599 aa).

The tr-type G domain occupies Lys-2 to Glu-184. Residues Asp-14–Thr-19 and Asn-131–Asp-134 each bind GTP.

This sequence belongs to the TRAFAC class translation factor GTPase superfamily. Classic translation factor GTPase family. LepA subfamily.

It is found in the cell inner membrane. The enzyme catalyses GTP + H2O = GDP + phosphate + H(+). Required for accurate and efficient protein synthesis under certain stress conditions. May act as a fidelity factor of the translation reaction, by catalyzing a one-codon backward translocation of tRNAs on improperly translocated ribosomes. Back-translocation proceeds from a post-translocation (POST) complex to a pre-translocation (PRE) complex, thus giving elongation factor G a second chance to translocate the tRNAs correctly. Binds to ribosomes in a GTP-dependent manner. This is Elongation factor 4 from Escherichia coli (strain SE11).